A 478-amino-acid polypeptide reads, in one-letter code: Cytochrome c-552 (478 aa).

The N-terminal stretch at 1-26 (MTRIKINARRIFSLLIPFFFFTSVHA) is a signal peptide. Residue histidine 94 participates in heme c binding. Residues cysteine 122, cysteine 125, and lysine 126 each coordinate heme. Residues cysteine 160, cysteine 163, histidine 164, cysteine 209, cysteine 212, and histidine 213 each contribute to the heme c site. Ca(2+) contacts are provided by glutamate 215, tyrosine 216, lysine 261, and glutamine 263. Tyrosine 216 provides a ligand contact to substrate. Histidine 264 is a substrate binding site. Residues histidine 275, cysteine 282, cysteine 285, histidine 286, histidine 301, cysteine 314, cysteine 317, histidine 318, and histidine 393 each coordinate heme c.

This sequence belongs to the cytochrome c-552 family. It depends on Ca(2+) as a cofactor. Requires heme c as cofactor.

The protein localises to the periplasm. The catalysed reaction is 6 Fe(III)-[cytochrome c] + NH4(+) + 2 H2O = 6 Fe(II)-[cytochrome c] + nitrite + 8 H(+). The protein operates within nitrogen metabolism; nitrate reduction (assimilation). Functionally, catalyzes the reduction of nitrite to ammonia, consuming six electrons in the process. This is Cytochrome c-552 from Shigella flexneri.